We begin with the raw amino-acid sequence, 217 residues long: UPF0323 lipoprotein HPSH_01205 (217 aa).

A signal peptide spans 1-27; the sequence is MKKPYRKISDYAIVGGLSALVMVSIVG. The N-palmitoyl cysteine moiety is linked to residue Cys28. A lipid anchor (S-diacylglycerol cysteine) is attached at Cys28. Residues 160 to 171 show a composition bias toward polar residues; sequence QRTYKSPQAYQR. The segment at 160–217 is disordered; it reads QRTYKSPQAYQRSQNSFSKSAPSASSMGGASKGQSGFFGSSRPTSSPAVSSGTRGFNS. A compositionally biased stretch (low complexity) spans 172 to 210; the sequence is SQNSFSKSAPSASSMGGASKGQSGFFGSSRPTSSPAVSS.

It belongs to the UPF0323 family.

The protein resides in the cell membrane. This chain is UPF0323 lipoprotein HPSH_01205, found in Helicobacter pylori (strain Shi470).